The primary structure comprises 281 residues: 4-diphosphocytidyl-2-C-methyl-D-erythritol kinase (281 aa).

The active site involves K15. 98–108 (PTGAGLGGGSS) provides a ligand contact to ATP. The active site involves D140.

Belongs to the GHMP kinase family. IspE subfamily.

The enzyme catalyses 4-CDP-2-C-methyl-D-erythritol + ATP = 4-CDP-2-C-methyl-D-erythritol 2-phosphate + ADP + H(+). Its pathway is isoprenoid biosynthesis; isopentenyl diphosphate biosynthesis via DXP pathway; isopentenyl diphosphate from 1-deoxy-D-xylulose 5-phosphate: step 3/6. In terms of biological role, catalyzes the phosphorylation of the position 2 hydroxy group of 4-diphosphocytidyl-2C-methyl-D-erythritol. This Neisseria gonorrhoeae (strain NCCP11945) protein is 4-diphosphocytidyl-2-C-methyl-D-erythritol kinase.